The primary structure comprises 120 residues: Large-conductance mechanosensitive channel (120 aa).

2 helical membrane passes run 7–27 and 64–84; these read EFAL…GAAF and GLFI…FIFV.

Belongs to the MscL family. In terms of assembly, homopentamer.

Its subcellular location is the cell membrane. Its function is as follows. Channel that opens in response to stretch forces in the membrane lipid bilayer. May participate in the regulation of osmotic pressure changes within the cell. The chain is Large-conductance mechanosensitive channel from Staphylococcus aureus (strain Mu3 / ATCC 700698).